The following is a 426-amino-acid chain: Glutamate-1-semialdehyde 2,1-aminomutase (426 aa).

Lys265 is subject to N6-(pyridoxal phosphate)lysine.

Belongs to the class-III pyridoxal-phosphate-dependent aminotransferase family. HemL subfamily. As to quaternary structure, homodimer. Requires pyridoxal 5'-phosphate as cofactor.

The protein resides in the cytoplasm. It carries out the reaction (S)-4-amino-5-oxopentanoate = 5-aminolevulinate. It functions in the pathway porphyrin-containing compound metabolism; protoporphyrin-IX biosynthesis; 5-aminolevulinate from L-glutamyl-tRNA(Glu): step 2/2. This chain is Glutamate-1-semialdehyde 2,1-aminomutase, found in Pectobacterium carotovorum subsp. carotovorum (strain PC1).